The chain runs to 393 residues: MSANYWASTQCNNWLLDRPQLELARKEDLRYATRLECAALGVFFSNLLSLICKRLNLRQRVTASANVFFRRFFAKNSYSALDPFLVCATCVYVAAKVEESPIHIKSAVAEATRSFTEHGFRGMPTDHSSLAEMEFYLLEEMEFDMVLFHSYRSLIVMFEDYGSGSAVGSGNSIHERSAGAAGSGSGSGGSGMMIGLGIEAAAFGVTKGLASVEEGDAASAIAEEDKVQLNEFNDEVLLMCWFILNDTYKTDIPLMYPPYMVALASIWLGLSLHPPSFDKITASLHTMQTRRDEHHLSIQRILDNPASTPAELASAKREPSPPSQDALTFFASLNVSLPLLAEIVQEMVSAYSVQHQVQRLVSDGPGIVKLLERMRESRRVALIKDRDQTRTHA.

The Cyclin N-terminal domain occupies 51–146 (ICKRLNLRQR…LLEEMEFDMV (96 aa)).

This sequence belongs to the cyclin family. Cyclin C subfamily. In terms of assembly, component of the SRB8-11 complex, a regulatory module of the Mediator complex.

It is found in the nucleus. Component of the SRB8-11 complex. The SRB8-11 complex is a regulatory module of the Mediator complex which is itself involved in regulation of basal and activated RNA polymerase II-dependent transcription. The SRB8-11 complex may be involved in the transcriptional repression of a subset of genes regulated by Mediator. It may inhibit the association of the Mediator complex with RNA polymerase II to form the holoenzyme complex. The SRB8-11 complex phosphorylates the C-terminal domain (CTD) of the largest subunit of RNA polymerase II. This is RNA polymerase II holoenzyme cyclin-like subunit (SSN8) from Mycosarcoma maydis (Corn smut fungus).